Here is a 201-residue protein sequence, read N- to C-terminus: Regulator of G-protein signaling rgs-1 (201 aa).

Positions 37–156 constitute an RGS domain; that stretch reads SWQQSFDTLM…FLTSIFYRET (120 aa). The disordered stretch occupies residues 168–201; the sequence is GGDEEKEREQRAERARLNVPATAAEGSSKDISMV. A compositionally biased stretch (basic and acidic residues) spans 170–183; it reads DEEKEREQRAERAR.

In terms of tissue distribution, expressed in most or all neurons.

In terms of biological role, inhibits G protein signaling in nervous system, interacting preferentially with the G(O) subfamily member goa-1. In vitro, protein acts as a GTPase activator of goa-1. Rgs-1 and rgs-2 redundantly adjust signaling when worms are fed to allow rapid induction of egg-laying behavior. The chain is Regulator of G-protein signaling rgs-1 (rgs-1) from Caenorhabditis elegans.